A 578-amino-acid chain; its full sequence is Membrane protein insertase YidC (578 aa).

A helical membrane pass occupies residues 3-23 (IQRSILIVALAVVSYLLVLQW). The tract at residues 34 to 72 (AASASMNTTQGLPDTPSASGTSSDVPTAQSSAAGSEAAD) is disordered. Residues 37–66 (ASMNTTQGLPDTPSASGTSSDVPTAQSSAA) are compositionally biased toward polar residues. A run of 5 helical transmembrane segments spans residues 361-381 (LELT…FWLL), 387-407 (LIGN…LAFF), 457-477 (LGGC…YWVL), 500-520 (PFFI…MLNP), and 535-555 (PIIF…YWVV).

The protein belongs to the OXA1/ALB3/YidC family. Type 1 subfamily. As to quaternary structure, interacts with the Sec translocase complex via SecD. Specifically interacts with transmembrane segments of nascent integral membrane proteins during membrane integration.

Its subcellular location is the cell inner membrane. In terms of biological role, required for the insertion and/or proper folding and/or complex formation of integral membrane proteins into the membrane. Involved in integration of membrane proteins that insert both dependently and independently of the Sec translocase complex, as well as at least some lipoproteins. Aids folding of multispanning membrane proteins. The protein is Membrane protein insertase YidC of Pseudomonas aeruginosa (strain ATCC 15692 / DSM 22644 / CIP 104116 / JCM 14847 / LMG 12228 / 1C / PRS 101 / PAO1).